The chain runs to 591 residues: Aspartate--tRNA(Asp/Asn) ligase (591 aa).

Residue Glu-175 participates in L-aspartate binding. The interval 199-202 (QQYK) is aspartate. Positions 221 and 450 each coordinate L-aspartate. 221–223 (RDE) lines the ATP pocket. ATP is bound at residue Glu-484. Residue Arg-491 participates in L-aspartate binding. 536–539 (GVDR) provides a ligand contact to ATP.

It belongs to the class-II aminoacyl-tRNA synthetase family. Type 1 subfamily. As to quaternary structure, homodimer.

It is found in the cytoplasm. The catalysed reaction is tRNA(Asx) + L-aspartate + ATP = L-aspartyl-tRNA(Asx) + AMP + diphosphate. In terms of biological role, aspartyl-tRNA synthetase with relaxed tRNA specificity since it is able to aspartylate not only its cognate tRNA(Asp) but also tRNA(Asn). Reaction proceeds in two steps: L-aspartate is first activated by ATP to form Asp-AMP and then transferred to the acceptor end of tRNA(Asp/Asn). The polypeptide is Aspartate--tRNA(Asp/Asn) ligase (Rhodopseudomonas palustris (strain ATCC BAA-98 / CGA009)).